Here is a 118-residue protein sequence, read N- to C-terminus: Basic phospholipase A2 1 (118 aa).

Cystine bridges form between cysteine 11–cysteine 72, cysteine 26–cysteine 117, cysteine 28–cysteine 44, cysteine 43–cysteine 98, cysteine 50–cysteine 91, cysteine 60–cysteine 84, and cysteine 78–cysteine 89. Positions 27, 29, and 31 each coordinate Ca(2+). The active site involves histidine 47. Aspartate 48 is a binding site for Ca(2+). The active site involves aspartate 92.

The protein belongs to the phospholipase A2 family. Group I subfamily. D49 sub-subfamily. Ca(2+) serves as cofactor. As to expression, expressed by the venom gland.

It is found in the secreted. It carries out the reaction a 1,2-diacyl-sn-glycero-3-phosphocholine + H2O = a 1-acyl-sn-glycero-3-phosphocholine + a fatty acid + H(+). In terms of biological role, PLA2 catalyzes the calcium-dependent hydrolysis of the 2-acyl groups in 3-sn-phosphoglycerides. The polypeptide is Basic phospholipase A2 1 (Naja melanoleuca (Forest cobra)).